Consider the following 488-residue polypeptide: Ribulose bisphosphate carboxylase large chain (488 aa).

Asn-127 and Thr-177 together coordinate substrate. Lys-179 (proton acceptor) is an active-site residue. Lys-181 is a binding site for substrate. Lys-205, Asp-207, and Glu-208 together coordinate Mg(2+). Lys-205 is subject to N6-carboxylysine. The Proton acceptor role is filled by His-297. 3 residues coordinate substrate: Arg-298, His-330, and Ser-382.

Belongs to the RuBisCO large chain family. Type I subfamily. In terms of assembly, heterohexadecamer of 8 large chains and 8 small chains. Requires Mg(2+) as cofactor.

Its subcellular location is the plastid. It localises to the chloroplast. It carries out the reaction 2 (2R)-3-phosphoglycerate + 2 H(+) = D-ribulose 1,5-bisphosphate + CO2 + H2O. The enzyme catalyses D-ribulose 1,5-bisphosphate + O2 = 2-phosphoglycolate + (2R)-3-phosphoglycerate + 2 H(+). Functionally, ruBisCO catalyzes two reactions: the carboxylation of D-ribulose 1,5-bisphosphate, the primary event in carbon dioxide fixation, as well as the oxidative fragmentation of the pentose substrate in the photorespiration process. Both reactions occur simultaneously and in competition at the same active site. The polypeptide is Ribulose bisphosphate carboxylase large chain (Porphyra purpurea (Red seaweed)).